We begin with the raw amino-acid sequence, 429 residues long: 28S rRNA (cytosine-C(5))-methyltransferase (429 aa).

G2 is subject to N-acetylglycine. Phosphoserine is present on S167. S-adenosyl-L-methionine-binding positions include 234–240 (CAAPGNK), D258, R263, and D305. Residue C359 is the Nucleophile of the active site.

This sequence belongs to the class I-like SAM-binding methyltransferase superfamily. RsmB/NOP family. Ubiquitous. Detected in placenta, heart and skeletal muscle.

It localises to the nucleus. Its subcellular location is the nucleolus. It carries out the reaction cytidine(3782) in 28S rRNA + S-adenosyl-L-methionine = 5-methylcytidine(3782) in 28S rRNA + S-adenosyl-L-homocysteine + H(+). In terms of biological role, S-adenosyl-L-methionine-dependent methyltransferase that specifically methylates the C(5) position of cytosine 3782 (m5C3782) in 28S rRNA. m5C3782 promotes protein translation without affecting ribosome biogenesis and fidelity. Required for corpus callosum and cerebral cortex development. The protein is 28S rRNA (cytosine-C(5))-methyltransferase of Homo sapiens (Human).